The chain runs to 605 residues: ATP-dependent RNA helicase dbp9 (605 aa).

Residues 1 to 30 (MKRKLDANDVPSPEAADKKEKKEEDDADFE) form a disordered region. Basic and acidic residues predominate over residues 15–24 (AADKKEKKEE). Positions 27-55 (ADFESLNLDPRLRQALIKEKFTKPTLVQA) match the Q motif motif. In terms of domain architecture, Helicase ATP-binding spans 58-236 (IPLALEGKDI…GLFCRSPVTL (179 aa)). ATP is bound at residue 71-78 (AKTGSGKT). A DEAD box motif is present at residues 184–187 (DEAD). The Helicase C-terminal domain occupies 247-469 (GVSQFVVRCA…EVKPYHFEMK (223 aa)). Disordered stretches follow at residues 339 to 373 (ARKSKKSKETEEAGSSDEDEGEPEDKSKRRKVSGK) and 564 to 605 (RKQN…RGRK). Over residues 350-361 (EAGSSDEDEGEP) the composition is skewed to acidic residues. The segment covering 572–591 (RKAREKNRGKGNGRKFAGVK) has biased composition (basic residues).

It belongs to the DEAD box helicase family. DDX56/DBP9 subfamily.

The protein localises to the nucleus. It localises to the nucleolus. The enzyme catalyses ATP + H2O = ADP + phosphate + H(+). Its function is as follows. ATP-binding RNA helicase involved in the biogenesis of 60S ribosomal subunits and is required for the normal formation of 25S and 5.8S rRNAs. This Aspergillus oryzae (strain ATCC 42149 / RIB 40) (Yellow koji mold) protein is ATP-dependent RNA helicase dbp9 (dbp9).